Reading from the N-terminus, the 644-residue chain is 1-deoxy-D-xylulose-5-phosphate synthase (644 aa).

Thiamine diphosphate contacts are provided by residues His-84 and 125-127 (GHS). Asp-156 serves as a coordination point for Mg(2+). Thiamine diphosphate contacts are provided by residues 157–158 (GA), Asn-185, Tyr-296, and Glu-378. Asn-185 is a Mg(2+) binding site.

Belongs to the transketolase family. DXPS subfamily. As to quaternary structure, homodimer. Requires Mg(2+) as cofactor. Thiamine diphosphate serves as cofactor.

The enzyme catalyses D-glyceraldehyde 3-phosphate + pyruvate + H(+) = 1-deoxy-D-xylulose 5-phosphate + CO2. It participates in metabolic intermediate biosynthesis; 1-deoxy-D-xylulose 5-phosphate biosynthesis; 1-deoxy-D-xylulose 5-phosphate from D-glyceraldehyde 3-phosphate and pyruvate: step 1/1. Its function is as follows. Catalyzes the acyloin condensation reaction between C atoms 2 and 3 of pyruvate and glyceraldehyde 3-phosphate to yield 1-deoxy-D-xylulose-5-phosphate (DXP). The chain is 1-deoxy-D-xylulose-5-phosphate synthase from Paramagnetospirillum magneticum (strain ATCC 700264 / AMB-1) (Magnetospirillum magneticum).